The chain runs to 311 residues: Ribonuclease HIII (311 aa).

Residues 95-311 (MSIVGSDEVG…NTEKAFRLLK (217 aa)) enclose the RNase H type-2 domain. The a divalent metal cation site is built by Asp-101, Glu-102, and Asp-206.

This sequence belongs to the RNase HII family. RnhC subfamily. Requires Mn(2+) as cofactor. The cofactor is Mg(2+).

Its subcellular location is the cytoplasm. The catalysed reaction is Endonucleolytic cleavage to 5'-phosphomonoester.. Its function is as follows. Endonuclease that specifically degrades the RNA of RNA-DNA hybrids. The polypeptide is Ribonuclease HIII (Bacillus cereus (strain 03BB102)).